We begin with the raw amino-acid sequence, 486 residues long: UDP-GalNAc:beta-1,3-N-acetylgalactosaminyltransferase 2 (486 aa).

Residues 1-10 (MRHLLFLCPC) are Cytoplasmic-facing. The chain crosses the membrane as a helical; Signal-anchor for type II membrane protein span at residues 11-31 (VIGVAFHLWLFNFSGLFSWFL). Topologically, residues 32–486 (VWSPHSYDIV…CGNPCACEDR (455 aa)) are lumenal. N-linked (GlcNAc...) asparagine glycosylation is found at Asn103 and Asn160.

The protein belongs to the glycosyltransferase 31 family.

The protein localises to the golgi apparatus membrane. It localises to the endoplasmic reticulum. The catalysed reaction is 3-O-(N-acetyl-beta-D-glucosaminyl-(1-&gt;4)-alpha-D-mannosyl)-L-threonyl-[protein] + UDP-N-acetyl-alpha-D-galactosamine = 3-O-[beta-D-GalNAc-(1-&gt;3)-beta-D-GlcNAc-(1-&gt;4)-alpha-D-Man]-L-Thr-[protein] + UDP + H(+). It participates in protein modification; protein glycosylation. In terms of biological role, beta-1,3-N-acetylgalactosaminyltransferase that synthesizes a unique carbohydrate structure, GalNAc-beta-1-3GlcNAc, on N- and O-glycans. Has no galactose nor galactosaminyl transferase activity toward any acceptor substrate. Involved in alpha-dystroglycan (dag1) glycosylation. The chain is UDP-GalNAc:beta-1,3-N-acetylgalactosaminyltransferase 2 (b3galnt2) from Xenopus laevis (African clawed frog).